The chain runs to 1234 residues: DNA-directed RNA polymerase subunit beta (1234 aa).

The interval 1189 to 1212 (VLSSQDNDYEEPEENDEEDELNLD) is disordered. The span at 1195–1212 (NDYEEPEENDEEDELNLD) shows a compositional bias: acidic residues.

The protein belongs to the RNA polymerase beta chain family. In terms of assembly, the RNAP catalytic core consists of 2 alpha, 1 beta, 1 beta' and 1 omega subunit. When a sigma factor is associated with the core the holoenzyme is formed, which can initiate transcription.

The catalysed reaction is RNA(n) + a ribonucleoside 5'-triphosphate = RNA(n+1) + diphosphate. Its function is as follows. DNA-dependent RNA polymerase catalyzes the transcription of DNA into RNA using the four ribonucleoside triphosphates as substrates. This is DNA-directed RNA polymerase subunit beta from Clostridium kluyveri (strain NBRC 12016).